Here is a 139-residue protein sequence, read N- to C-terminus: FAD synthase (139 aa).

ATP-binding positions include 9–10 (TF), 14–17 (HPGH), and aspartate 92.

The protein belongs to the archaeal FAD synthase family. Homodimer. It depends on a divalent metal cation as a cofactor.

It catalyses the reaction FMN + ATP + H(+) = FAD + diphosphate. Its pathway is cofactor biosynthesis; FAD biosynthesis; FAD from FMN: step 1/1. Its function is as follows. Catalyzes the transfer of the AMP portion of ATP to flavin mononucleotide (FMN) to produce flavin adenine dinucleotide (FAD) coenzyme. The protein is FAD synthase of Methanosarcina barkeri (strain Fusaro / DSM 804).